A 381-amino-acid chain; its full sequence is Dual-specificity RNA methyltransferase RlmN (381 aa).

The active-site Proton acceptor is the Glu-96. In terms of domain architecture, Radical SAM core spans Thr-102–Asp-342. Cys-109 and Cys-345 form a disulfide bridge. [4Fe-4S] cluster-binding residues include Cys-116, Cys-120, and Cys-123. S-adenosyl-L-methionine is bound by residues Gly-170 to Glu-171, Ser-202, Ser-224 to His-226, and Asn-302. The active-site S-methylcysteine intermediate is Cys-345.

Belongs to the radical SAM superfamily. RlmN family. [4Fe-4S] cluster serves as cofactor.

It is found in the cytoplasm. The catalysed reaction is adenosine(2503) in 23S rRNA + 2 reduced [2Fe-2S]-[ferredoxin] + 2 S-adenosyl-L-methionine = 2-methyladenosine(2503) in 23S rRNA + 5'-deoxyadenosine + L-methionine + 2 oxidized [2Fe-2S]-[ferredoxin] + S-adenosyl-L-homocysteine. It catalyses the reaction adenosine(37) in tRNA + 2 reduced [2Fe-2S]-[ferredoxin] + 2 S-adenosyl-L-methionine = 2-methyladenosine(37) in tRNA + 5'-deoxyadenosine + L-methionine + 2 oxidized [2Fe-2S]-[ferredoxin] + S-adenosyl-L-homocysteine. In terms of biological role, specifically methylates position 2 of adenine 2503 in 23S rRNA and position 2 of adenine 37 in tRNAs. m2A2503 modification seems to play a crucial role in the proofreading step occurring at the peptidyl transferase center and thus would serve to optimize ribosomal fidelity. The protein is Dual-specificity RNA methyltransferase RlmN of Pseudomonas putida (strain GB-1).